Consider the following 129-residue polypeptide: Small ribosomal subunit protein uS11 (129 aa).

Belongs to the universal ribosomal protein uS11 family. As to quaternary structure, part of the 30S ribosomal subunit. Interacts with proteins S7 and S18. Binds to IF-3.

Located on the platform of the 30S subunit, it bridges several disparate RNA helices of the 16S rRNA. Forms part of the Shine-Dalgarno cleft in the 70S ribosome. In Lysinibacillus sphaericus (strain C3-41), this protein is Small ribosomal subunit protein uS11.